Consider the following 245-residue polypeptide: 1-(5-phosphoribosyl)-5-[(5-phosphoribosylamino)methylideneamino] imidazole-4-carboxamide isomerase (245 aa).

The Proton acceptor role is filled by aspartate 7. The active-site Proton donor is the aspartate 129.

This sequence belongs to the HisA/HisF family.

It is found in the cytoplasm. The enzyme catalyses 1-(5-phospho-beta-D-ribosyl)-5-[(5-phospho-beta-D-ribosylamino)methylideneamino]imidazole-4-carboxamide = 5-[(5-phospho-1-deoxy-D-ribulos-1-ylimino)methylamino]-1-(5-phospho-beta-D-ribosyl)imidazole-4-carboxamide. Its pathway is amino-acid biosynthesis; L-histidine biosynthesis; L-histidine from 5-phospho-alpha-D-ribose 1-diphosphate: step 4/9. The sequence is that of 1-(5-phosphoribosyl)-5-[(5-phosphoribosylamino)methylideneamino] imidazole-4-carboxamide isomerase from Aliivibrio salmonicida (strain LFI1238) (Vibrio salmonicida (strain LFI1238)).